The following is a 462-amino-acid chain: ATP synthase subunit beta (462 aa).

ATP is bound at residue 152 to 159 (GGAGVGKT).

The protein belongs to the ATPase alpha/beta chains family. F-type ATPases have 2 components, CF(1) - the catalytic core - and CF(0) - the membrane proton channel. CF(1) has five subunits: alpha(3), beta(3), gamma(1), delta(1), epsilon(1). CF(0) has three main subunits: a(1), b(2) and c(9-12). The alpha and beta chains form an alternating ring which encloses part of the gamma chain. CF(1) is attached to CF(0) by a central stalk formed by the gamma and epsilon chains, while a peripheral stalk is formed by the delta and b chains.

The protein localises to the cell inner membrane. It catalyses the reaction ATP + H2O + 4 H(+)(in) = ADP + phosphate + 5 H(+)(out). Its function is as follows. Produces ATP from ADP in the presence of a proton gradient across the membrane. The catalytic sites are hosted primarily by the beta subunits. This Shewanella amazonensis (strain ATCC BAA-1098 / SB2B) protein is ATP synthase subunit beta.